The following is a 181-amino-acid chain: Oligoribonuclease (181 aa).

In terms of domain architecture, Exonuclease spans 8–171 (LIWIDLEMTG…DDIRESVAEL (164 aa)). Residue Tyr-129 is part of the active site.

Belongs to the oligoribonuclease family. Homodimer.

It localises to the cytoplasm. Its function is as follows. 3'-to-5' exoribonuclease specific for small oligoribonucleotides. This chain is Oligoribonuclease, found in Escherichia coli O157:H7.